Here is a 2352-residue protein sequence, read N- to C-terminus: Highly reducing polyketide synthase ZEA2 (2352 aa).

The Ketosynthase family 3 (KS3) domain occupies 9–433 (PGPVAIVGLA…GTNGHVVLEA (425 aa)). Catalysis depends on for beta-ketoacyl synthase activity residues Cys-181, His-316, and His-356. Residues 544-875 (FVFTGQGAQW…LATSLFLQGV (332 aa)) are malonyl-CoA:ACP transacylase (MAT) domain. Ser-634 acts as the For malonyltransferase activity in catalysis. The segment at 923–1058 (RSIIGAPVPK…GLITIDYEGN (136 aa)) is N-terminal hotdog fold. In terms of domain architecture, PKS/mFAS DH spans 923-1242 (RSIIGAPVPK…TSELEMDGAA (320 aa)). The tract at residues 925 to 1237 (IIGAPVPKMN…VIDFRTSELE (313 aa)) is dehydratase (DH) domain. The active-site Proton acceptor; for dehydratase activity is His-955. Residues 1086–1242 (PATYAKDRFY…TSELEMDGAA (157 aa)) form a C-terminal hotdog fold region. Asp-1152 functions as the Proton donor; for dehydratase activity in the catalytic mechanism. An enoylreductase (ER) domain region spans residues 1643–1955 (GLLDTLYFVD…QGKHRGKIVL (313 aa)). A catalytic ketoreductase (KRc) domain region spans residues 1979–2159 (ATYLFVGGLG…VSVNLGIMRD (181 aa)). The region spanning 2269 to 2346 (KATEIITNAL…SFAGKLASTS (78 aa)) is the Carrier domain. Ser-2306 carries the post-translational modification O-(pantetheine 4'-phosphoryl)serine.

The protein operates within mycotoxin biosynthesis. Highly reducing polyketide synthase; part of the gene cluster that mediates the biosynthesis of zearalenone (ZEA), a nonsteroid estrogen that is a contaminant of cereal grains and causes estrogenic disorders in humans and animals. The ZEA backbone is synthesized from a single acetyl-CoA molecule and eight malonyl-CoA molecules. The reducing polyketide synthase ZEA2 is proposed to synthesize a reduced hexaketide intermediate by using different combinations of its reductive domains during each round of condensation. The hexaketide thioester is then transacylated to the non-reducing polyketide synthase ZEA1 and is further condensed with three malonyl-CoAs without reductive tailoring to yield a mixed reduced/unreduced nonaketide. ZEA1 must be able to interact with ZEA2 to facilitate starter-unit acyltransfer and initiate polyketide biosynthesis. ZEA1 also mediates the required C2-C7 cyclization to form the resorcylate core and catalyzes the formation of the macrolactone. ZEB1 is then responsible for the chemical conversion of beta-zearalenonol (beta-ZOL) to ZEA in the biosynthetic pathway. This chain is Highly reducing polyketide synthase ZEA2, found in Gibberella zeae (strain ATCC MYA-4620 / CBS 123657 / FGSC 9075 / NRRL 31084 / PH-1) (Wheat head blight fungus).